A 466-amino-acid polypeptide reads, in one-letter code: Histidinol dehydrogenase, chloroplastic (466 aa).

A chloroplast-targeting transit peptide spans 1-30; that stretch reads MSLNLSRLSLLSSPRISISTHAPRKGYVCC. Residues Tyr155, Gln217, and Asn240 each coordinate NAD(+). Positions 266, 288, and 291 each coordinate substrate. Zn(2+) is bound by residues Gln288 and His291. Active-site proton acceptor residues include Glu356 and His357. Residues His357, Asp390, Glu444, and His449 each coordinate substrate. Asp390 is a Zn(2+) binding site. Zn(2+) is bound at residue His449.

The protein belongs to the histidinol dehydrogenase family. Zn(2+) serves as cofactor.

The protein resides in the plastid. It is found in the chloroplast. The enzyme catalyses L-histidinol + 2 NAD(+) + H2O = L-histidine + 2 NADH + 3 H(+). Its pathway is amino-acid biosynthesis; L-histidine biosynthesis; L-histidine from 5-phospho-alpha-D-ribose 1-diphosphate: step 9/9. Its function is as follows. Catalyzes the sequential NAD-dependent oxidations of L-histidinol to L-histidinaldehyde and then to L-histidine. In Arabidopsis thaliana (Mouse-ear cress), this protein is Histidinol dehydrogenase, chloroplastic (HISN8).